We begin with the raw amino-acid sequence, 1062 residues long: Translation initiation factor IF-2 (1062 aa).

The disordered stretch occupies residues 34–463 (SASSTVEAPV…RMGAMVPRGN (430 aa)). Residues 76-121 (PTPPSRPGLAPRPGPRPVPGRPGPLGRPGPATPAPSPSPASPPLPA) are compositionally biased toward pro residues. Low complexity predominate over residues 122–153 (SPVQASPVQASPVQASPTSAPAAPRPAAASAV). Residues 154-178 (PAPPMPSVPSAPSGPRPGPNAPRPG) show a composition bias toward pro residues. Positions 198–214 (TAGGPTAGGPTAGGPTA) are enriched in gly residues. Positions 294–305 (RPTPGGMPPRPG) are enriched in pro residues. 2 stretches are compositionally biased toward gly residues: residues 307–324 (PRSG…GTGG) and 344–430 (PGGG…GGRG). Over residues 431-442 (RPGRQRKSKRAK) the composition is skewed to basic residues. The tr-type G domain occupies 555–727 (SRPPVVTVMG…IVLTADASLD (173 aa)). The tract at residues 564–571 (GHVDHGKT) is G1. A GTP-binding site is contributed by 564–571 (GHVDHGKT). Positions 589 to 593 (GITQH) are G2. Positions 614–617 (DTPG) are G3. GTP-binding positions include 614–618 (DTPGH) and 668–671 (NKVD). Positions 668–671 (NKVD) are G4. The interval 704–706 (SAR) is G5.

The protein belongs to the TRAFAC class translation factor GTPase superfamily. Classic translation factor GTPase family. IF-2 subfamily.

The protein localises to the cytoplasm. Functionally, one of the essential components for the initiation of protein synthesis. Protects formylmethionyl-tRNA from spontaneous hydrolysis and promotes its binding to the 30S ribosomal subunits. Also involved in the hydrolysis of GTP during the formation of the 70S ribosomal complex. This Frankia casuarinae (strain DSM 45818 / CECT 9043 / HFP020203 / CcI3) protein is Translation initiation factor IF-2.